The primary structure comprises 124 residues: Protein YobA (124 aa).

Positions 1–26 are cleaved as a signal peptide; it reads MASTARSLRYALAILTTSLVTPSVWA. 2 residues coordinate Cu cation: His-27 and His-113.

The protein belongs to the CopC family.

It is found in the periplasm. The sequence is that of Protein YobA (yobA) from Escherichia coli O6:H1 (strain CFT073 / ATCC 700928 / UPEC).